We begin with the raw amino-acid sequence, 101 residues long: Small ribosomal subunit protein uS14 (101 aa).

The protein belongs to the universal ribosomal protein uS14 family. Part of the 30S ribosomal subunit. Contacts proteins S3 and S10.

Its function is as follows. Binds 16S rRNA, required for the assembly of 30S particles and may also be responsible for determining the conformation of the 16S rRNA at the A site. The chain is Small ribosomal subunit protein uS14 from Shewanella halifaxensis (strain HAW-EB4).